We begin with the raw amino-acid sequence, 127 residues long: Large ribosomal subunit protein uL22 (127 aa).

It belongs to the universal ribosomal protein uL22 family. As to quaternary structure, part of the 50S ribosomal subunit.

Its function is as follows. This protein binds specifically to 23S rRNA; its binding is stimulated by other ribosomal proteins, e.g. L4, L17, and L20. It is important during the early stages of 50S assembly. It makes multiple contacts with different domains of the 23S rRNA in the assembled 50S subunit and ribosome. The globular domain of the protein is located near the polypeptide exit tunnel on the outside of the subunit, while an extended beta-hairpin is found that lines the wall of the exit tunnel in the center of the 70S ribosome. The sequence is that of Large ribosomal subunit protein uL22 from Rhizorhabdus wittichii (strain DSM 6014 / CCUG 31198 / JCM 15750 / NBRC 105917 / EY 4224 / RW1) (Sphingomonas wittichii).